Here is a 1550-residue protein sequence, read N- to C-terminus: Pentafunctional AROM polypeptide (1550 aa).

The interval 1-379 (MSIERVPILG…YQLKAHQVSK (379 aa)) is 3-dehydroquinate synthase. NAD(+) is bound by residues 42–44 (DTN), 80–83 (ENNK), 111–113 (GGV), and aspartate 116. Arginine 127 is a binding site for 7-phospho-2-dehydro-3-deoxy-D-arabino-heptonate. 136–137 (TT) contacts NAD(+). 7-phospho-2-dehydro-3-deoxy-D-arabino-heptonate contacts are provided by aspartate 143 and lysine 149. Lysine 158 contacts NAD(+). Asparagine 159 is a 7-phospho-2-dehydro-3-deoxy-D-arabino-heptonate binding site. NAD(+) contacts are provided by residues 176–179 (FLET) and asparagine 187. Residue glutamate 191 coordinates Zn(2+). Residues 191–194 (EVVK) and lysine 243 each bind 7-phospho-2-dehydro-3-deoxy-D-arabino-heptonate. Residue glutamate 253 is the Proton acceptor; for 3-dehydroquinate synthase activity of the active site. Residues 257–261 (RNLLN) and histidine 264 each bind 7-phospho-2-dehydro-3-deoxy-D-arabino-heptonate. Position 264 (histidine 264) interacts with Zn(2+). The Proton acceptor; for 3-dehydroquinate synthase activity role is filled by histidine 268. 7-phospho-2-dehydro-3-deoxy-D-arabino-heptonate-binding residues include histidine 280 and lysine 351. Histidine 280 serves as a coordination point for Zn(2+). Residues 392–837 (VHPFTNPPKE…WDILHSKFKI (446 aa)) form an EPSP synthase region. Positions 857–1047 (DKGVIVIGMR…VPTGRSTAVV (191 aa)) are shikimate kinase. 864 to 871 (GMRGTGKS) contributes to the ATP binding site. The interval 1048-1257 (LTLPDLNNVA…NDDGLLTIGE (210 aa)) is 3-dehydroquinase. Catalysis depends on arginine 1193, which acts as the Schiff-base intermediate with substrate; for 3-dehydroquinate dehydratase activity. A shikimate dehydrogenase region spans residues 1270–1550 (AKKFWVIGSP…EIIHRAVVEE (281 aa)).

It in the N-terminal section; belongs to the sugar phosphate cyclases superfamily. Dehydroquinate synthase family. The protein in the 2nd section; belongs to the EPSP synthase family. This sequence in the 3rd section; belongs to the shikimate kinase family. In the 4th section; belongs to the type-I 3-dehydroquinase family. It in the C-terminal section; belongs to the shikimate dehydrogenase family. As to quaternary structure, homodimer. The cofactor is Zn(2+).

It is found in the cytoplasm. The catalysed reaction is 7-phospho-2-dehydro-3-deoxy-D-arabino-heptonate = 3-dehydroquinate + phosphate. It carries out the reaction 3-dehydroquinate = 3-dehydroshikimate + H2O. The enzyme catalyses shikimate + NADP(+) = 3-dehydroshikimate + NADPH + H(+). It catalyses the reaction shikimate + ATP = 3-phosphoshikimate + ADP + H(+). The catalysed reaction is 3-phosphoshikimate + phosphoenolpyruvate = 5-O-(1-carboxyvinyl)-3-phosphoshikimate + phosphate. It functions in the pathway metabolic intermediate biosynthesis; chorismate biosynthesis; chorismate from D-erythrose 4-phosphate and phosphoenolpyruvate: step 2/7. It participates in metabolic intermediate biosynthesis; chorismate biosynthesis; chorismate from D-erythrose 4-phosphate and phosphoenolpyruvate: step 3/7. Its pathway is metabolic intermediate biosynthesis; chorismate biosynthesis; chorismate from D-erythrose 4-phosphate and phosphoenolpyruvate: step 4/7. The protein operates within metabolic intermediate biosynthesis; chorismate biosynthesis; chorismate from D-erythrose 4-phosphate and phosphoenolpyruvate: step 5/7. It functions in the pathway metabolic intermediate biosynthesis; chorismate biosynthesis; chorismate from D-erythrose 4-phosphate and phosphoenolpyruvate: step 6/7. In terms of biological role, the AROM polypeptide catalyzes 5 consecutive enzymatic reactions in prechorismate polyaromatic amino acid biosynthesis. The chain is Pentafunctional AROM polypeptide from Candida dubliniensis (strain CD36 / ATCC MYA-646 / CBS 7987 / NCPF 3949 / NRRL Y-17841) (Yeast).